The following is a 217-amino-acid chain: UPF0502 protein VIBHAR_05349 (217 aa).

This sequence belongs to the UPF0502 family.

This Vibrio campbellii (strain ATCC BAA-1116) protein is UPF0502 protein VIBHAR_05349.